Consider the following 101-residue polypeptide: NAD(P)H-quinone oxidoreductase subunit 4L, chloroplastic (101 aa).

A run of 3 helical transmembrane segments spans residues 2-22 (MTEHVLILSAYLFSIGIYGLI), 32-52 (MCLELILNAVNLNLVTFSDLF), and 61-81 (IFSIFVIAIAAAEAAIGPAIV).

Belongs to the complex I subunit 4L family. NDH is composed of at least 16 different subunits, 5 of which are encoded in the nucleus.

Its subcellular location is the plastid. The protein localises to the chloroplast thylakoid membrane. It catalyses the reaction a plastoquinone + NADH + (n+1) H(+)(in) = a plastoquinol + NAD(+) + n H(+)(out). The catalysed reaction is a plastoquinone + NADPH + (n+1) H(+)(in) = a plastoquinol + NADP(+) + n H(+)(out). Its function is as follows. NDH shuttles electrons from NAD(P)H:plastoquinone, via FMN and iron-sulfur (Fe-S) centers, to quinones in the photosynthetic chain and possibly in a chloroplast respiratory chain. The immediate electron acceptor for the enzyme in this species is believed to be plastoquinone. Couples the redox reaction to proton translocation, and thus conserves the redox energy in a proton gradient. The chain is NAD(P)H-quinone oxidoreductase subunit 4L, chloroplastic from Liriodendron tulipifera (Tuliptree).